An 876-amino-acid polypeptide reads, in one-letter code: MTGKEIRAQFFKFFEERGHTVVESSNLIPRNDPTLLFTNAGMNQFKDVFLGLEKRDYVRACSSQKCVRAGGKHNDLENVGRTARHHTFFEMLGNFSFGDYFKKEAIAFAWEFLTKELKLDKDRLYVTVYTDDDEAADIWNRQEGVPLERIYRFGEKDNFWSMGDTGPCGPCTEIFWDNGPGTGCGSPTCEVGCDCDRYMEIWNNVFMQFNRDAQGNLTPLPKPSVDTGMGLERISTVMQGVTSNYDTDLLQGIIKHVEKLSGKRYRQDERDDVSMRVIADHSRAITFLICDGILPSNEGRGYVLRRIMRRAARHAKMLGFAEPALYRIVDAVNTMMGDAYPELLEREEYIKKVIHAEEERFIETLDRGLAILNEEVAALKKEGKSVVPGEVIFKLYDTYGFPVDLTADIVENEGFTIDEDGFALCMERQRLQARENWKGSGEEGLAEIYKTLHGRGIRSAFVGYSEQTAYSAITAILREGAEVAEAVAGEMVEVVVDTTPFYGASGGQAGDTGVISTGSAHLRVVATSKPFPDLTVHRALVTEGTVKAGDAADLRVATEVRGATARNHTATHLLQSALRQVLGEHVKQAGSLVTAERLRFDFTHFSAMTVEELRRVENIVNTYVMDNADVKSLEMAATEAMQSGATALFGEKYGDRVRVVKVGEVSSELCGGTHVRAAGDIGFFKIVGEAGIAAGVRRIEALTGSGALEYVQQLEDEQRSIAVLVKAEGGTALDKVDRLLARQKELQREVEALQARLNASRSADLLAGARETNGIKVLAAKVEMDDPKGLRELADSLKDRLQSGVIVIGCVSAGKANLLVAVTKDLSDRLRAGDIIKSLAPIIGGSGGGKPELAQAGGTKPENLDEALEAAYKIIG.

Zn(2+) contacts are provided by His568, His572, Cys670, and His674.

This sequence belongs to the class-II aminoacyl-tRNA synthetase family. Requires Zn(2+) as cofactor.

The protein localises to the cytoplasm. It catalyses the reaction tRNA(Ala) + L-alanine + ATP = L-alanyl-tRNA(Ala) + AMP + diphosphate. Catalyzes the attachment of alanine to tRNA(Ala) in a two-step reaction: alanine is first activated by ATP to form Ala-AMP and then transferred to the acceptor end of tRNA(Ala). Also edits incorrectly charged Ser-tRNA(Ala) and Gly-tRNA(Ala) via its editing domain. This Geotalea uraniireducens (strain Rf4) (Geobacter uraniireducens) protein is Alanine--tRNA ligase.